The chain runs to 122 residues: MAAVLVGSEVSVAGKLSKVTVDVDASKKFSWAEGKGSLVWKINDSDLALRSTNAGIEVKLTPKKGTTTSGIVLDLEGAKLTLSCGYKSVVVLFELGETPEGRGFSEMRSLSASNLSLLRMAN.

In Hordeum vulgare (Barley), this protein is Protein 6 (6).